We begin with the raw amino-acid sequence, 86 residues long: Myosuppressin (86 aa).

The first 18 residues, 1–18 (MAIFCNNVLAALPTQCNP), serve as a signal peptide directing secretion. A propeptide spanning residues 19-70 (GFLDDLPPRIRKVCVALSRIYELGSEMESYIGDKENHITGFHESIPLLDSGV) is cleaved from the precursor. Residue Q73 is modified to Pyrrolidone carboxylic acid. The residue at position 82 (F82) is a Phenylalanine amide.

Its subcellular location is the secreted. Myoinhibiting neuropeptide. The chain is Myosuppressin from Apis mellifera (Honeybee).